Consider the following 423-residue polypeptide: Histidine--tRNA ligase (423 aa).

The protein belongs to the class-II aminoacyl-tRNA synthetase family. In terms of assembly, homodimer.

It localises to the cytoplasm. The enzyme catalyses tRNA(His) + L-histidine + ATP = L-histidyl-tRNA(His) + AMP + diphosphate + H(+). This chain is Histidine--tRNA ligase, found in Staphylococcus haemolyticus (strain JCSC1435).